Reading from the N-terminus, the 114-residue chain is Small ribosomal subunit protein bS6 (114 aa).

It belongs to the bacterial ribosomal protein bS6 family.

Binds together with bS18 to 16S ribosomal RNA. The protein is Small ribosomal subunit protein bS6 of Hydrogenovibrio crunogenus (strain DSM 25203 / XCL-2) (Thiomicrospira crunogena).